We begin with the raw amino-acid sequence, 309 residues long: NADH-cytochrome b5 reductase 1 (309 aa).

Residues 31 to 51 (DWVVYSVALALALGTWKFFQL) form a helical membrane-spanning segment. In terms of domain architecture, FAD-binding FR-type spans 60-168 (TKFQEFELKE…RGPKGAFVYQ (109 aa)). Residues 148 to 163 (AGLSVGQSIRVRGPKG) and 174 to 208 (HFGMIAGGTGITPMLQVVRAIVRGRAAGDTTQVDL) each bind FAD.

This sequence belongs to the flavoprotein pyridine nucleotide cytochrome reductase family. Monomer. Component of the 2-(3-amino-3-carboxypropyl)histidine synthase complex composed of DPH1, DPH2, DPH3 and a NADH-dependent reductase, predominantly CBR1. FAD is required as a cofactor.

It is found in the mitochondrion outer membrane. The enzyme catalyses 2 Fe(III)-[cytochrome b5] + NADH = 2 Fe(II)-[cytochrome b5] + NAD(+) + H(+). It catalyses the reaction 2 Fe(3+)-[Dph3] + NADH = 2 Fe(2+)-[Dph3] + NAD(+) + H(+). Its pathway is protein modification; peptidyl-diphthamide biosynthesis. Functionally, NADH-dependent reductase for DPH3 and cytochrome b5. Required for the first step of diphthamide biosynthesis, a post-translational modification of histidine which occurs in elongation factor 2. DPH1 and DPH2 transfer a 3-amino-3-carboxypropyl (ACP) group from S-adenosyl-L-methionine (SAM) to a histidine residue, the reaction is assisted by a reduction system comprising DPH3 and a NADH-dependent reductase, predominantly CBR1. By reducing DPH3, also involved in the formation of the tRNA wobble base modification mcm5s 2U (5-methoxycarbonylmethyl-2-thiouridine), mediated by the elongator complex. The cytochrome b5/NADH cytochrome b5 reductase electron transfer system supports the catalytic activity of several sterol biosynthetic enzymes. In Pyricularia oryzae (strain 70-15 / ATCC MYA-4617 / FGSC 8958) (Rice blast fungus), this protein is NADH-cytochrome b5 reductase 1 (CBR1).